Reading from the N-terminus, the 1667-residue chain is Myomesin-1 (1667 aa).

Serine 124 and serine 142 each carry phosphoserine. The segment covering 192-210 has biased composition (low complexity); it reads SKQSTASKQSATSKRTTST. The segment at 192-217 is disordered; that stretch reads SKQSTASKQSATSKRTTSTLQREETF. 2 Ig-like C2-type domains span residues 258–349 and 376–478; these read PEFI…ASVV and PYGY…AYVF. Fibronectin type-III domains are found at residues 492 to 587, 620 to 714, and 721 to 814; these read APLD…ALDP, PPTD…VVGD, and APGK…VKAA. Residues 818–915 form a disordered region; it reads GVSPDVWPQL…PKKKKDPVAV (98 aa). Residues serine 863 and serine 867 each carry the phosphoserine modification. Positions 885-894 are enriched in low complexity; it reads EPLSSPPQEA. Fibronectin type-III domains follow at residues 918-1016 and 1023-1122; these read APYD…CEEW and PPHS…TRPG. The residue at position 1036 (serine 1036) is a Phosphoserine. Ig-like C2-type domains follow at residues 1114–1212, 1340–1426, and 1555–1644; these read PVVA…EEMK, PHFA…LKLV, and RVLG…FTVS.

Homodimer. Interacts with TTN/titin and PNKD. Ubiquitously expressed in all striated muscles. Expressed in all fiber types.

The protein resides in the cytoplasm. The protein localises to the myofibril. It localises to the sarcomere. Its subcellular location is the m line. Functionally, may link the intermediate filament cytoskeleton to the M-disk of the myofibrils in striated muscle. May also contact myosin filaments. Also binds beta-integrins. This chain is Myomesin-1 (Myom1), found in Mus musculus (Mouse).